Consider the following 118-residue polypeptide: DNA-directed RNA polymerase subunit omega (118 aa).

It belongs to the RNA polymerase subunit omega family. In terms of assembly, the RNAP catalytic core consists of 2 alpha, 1 beta, 1 beta' and 1 omega subunit. When a sigma factor is associated with the core the holoenzyme is formed, which can initiate transcription.

It carries out the reaction RNA(n) + a ribonucleoside 5'-triphosphate = RNA(n+1) + diphosphate. Its function is as follows. Promotes RNA polymerase assembly. Latches the N- and C-terminal regions of the beta' subunit thereby facilitating its interaction with the beta and alpha subunits. This chain is DNA-directed RNA polymerase subunit omega, found in Paracoccus denitrificans (strain Pd 1222).